Reading from the N-terminus, the 445-residue chain is Histone acetyltransferase of the MYST family 2 (445 aa).

Positions 1-23 are enriched in polar residues; the sequence is MGSSANTETNGNAPPPSSNQKPP. The disordered stretch occupies residues 1 to 58; the sequence is MGSSANTETNGNAPPPSSNQKPPATNGVDGSHPPPPPLTPDQAIIESDPSKKRKMGML. Positions 60–118 constitute a Tudor-knot domain; sequence LEVGTRVMCRWRDGKHHPVKVIERRRIHNGGQNDYEYYVHYTEFNRRLDEWTQLDQLDL. The MYST-type HAT domain maps to 169–440; sequence TKVKNISTIE…VDASKLIWTP (272 aa). The segment at 202–227 adopts a C2HC MYST-type zinc-finger fold; that stretch reads LFFCEFCLNFMKRKEQLQRHMRKCDL. Lysine 269 bears the N6-acetyllysine; by autocatalysis mark. Residues 312–314 and 319–325 contribute to the acetyl-CoA site; these read ILT and QRKGYGK. Residue glutamate 345 is the Proton donor/acceptor of the active site. Serine 349 serves as a coordination point for acetyl-CoA.

The protein belongs to the MYST (SAS/MOZ) family. In terms of assembly, interacts with MRG1 and MRG2. Post-translationally, autoacetylation at Lys-269 is required for proper function. Expressed in cotyledons, leaves, stems, roots and, at higher levels in developing flowers, particularly in the anthers and gynoecia. Constitutively expressed in all tissues, predominantly in shoot apical meristem.

The protein localises to the nucleus. The catalysed reaction is L-lysyl-[protein] + acetyl-CoA = N(6)-acetyl-L-lysyl-[protein] + CoA + H(+). In terms of biological role, histone acetyltransferase which may be involved in transcriptional activation. Acetylates 'Lys-5' of histone H4 (H4K5ac). Essential for gametophyte development. Negative regulator of flowering controlling the H4K5ac levels in the FLC chromatin. The protein is Histone acetyltransferase of the MYST family 2 of Arabidopsis thaliana (Mouse-ear cress).